We begin with the raw amino-acid sequence, 389 residues long: 1-deoxy-D-xylulose 5-phosphate reductoisomerase (389 aa).

Residues S11, G12, S13, V14, N39, and N122 each coordinate NADPH. K123 is a 1-deoxy-D-xylulose 5-phosphate binding site. Residue E124 participates in NADPH binding. D148 provides a ligand contact to Mn(2+). 1-deoxy-D-xylulose 5-phosphate-binding residues include S149, E150, S174, and H197. Residue E150 coordinates Mn(2+). G203 lines the NADPH pocket. 1-deoxy-D-xylulose 5-phosphate is bound by residues S210, N215, K216, and E219. A Mn(2+)-binding site is contributed by E219.

Belongs to the DXR family. Mg(2+) is required as a cofactor. The cofactor is Mn(2+).

It carries out the reaction 2-C-methyl-D-erythritol 4-phosphate + NADP(+) = 1-deoxy-D-xylulose 5-phosphate + NADPH + H(+). It participates in isoprenoid biosynthesis; isopentenyl diphosphate biosynthesis via DXP pathway; isopentenyl diphosphate from 1-deoxy-D-xylulose 5-phosphate: step 1/6. Functionally, catalyzes the NADPH-dependent rearrangement and reduction of 1-deoxy-D-xylulose-5-phosphate (DXP) to 2-C-methyl-D-erythritol 4-phosphate (MEP). This is 1-deoxy-D-xylulose 5-phosphate reductoisomerase from Leptospira borgpetersenii serovar Hardjo-bovis (strain JB197).